A 370-amino-acid chain; its full sequence is DNA replication and repair protein RecF (370 aa).

Position 30–37 (30–37 (GENAQGKT)) interacts with ATP.

It belongs to the RecF family.

It localises to the cytoplasm. Its function is as follows. The RecF protein is involved in DNA metabolism; it is required for DNA replication and normal SOS inducibility. RecF binds preferentially to single-stranded, linear DNA. It also seems to bind ATP. This Listeria monocytogenes serotype 4b (strain CLIP80459) protein is DNA replication and repair protein RecF.